The chain runs to 429 residues: Glutamate-1-semialdehyde 2,1-aminomutase (429 aa).

N6-(pyridoxal phosphate)lysine is present on lysine 265.

Belongs to the class-III pyridoxal-phosphate-dependent aminotransferase family. HemL subfamily. As to quaternary structure, homodimer. The cofactor is pyridoxal 5'-phosphate.

The protein localises to the cytoplasm. It catalyses the reaction (S)-4-amino-5-oxopentanoate = 5-aminolevulinate. The protein operates within porphyrin-containing compound metabolism; protoporphyrin-IX biosynthesis; 5-aminolevulinate from L-glutamyl-tRNA(Glu): step 2/2. The chain is Glutamate-1-semialdehyde 2,1-aminomutase from Azotobacter vinelandii (strain DJ / ATCC BAA-1303).